The following is a 388-amino-acid chain: S-adenosylmethionine synthase (388 aa).

ATP is bound at residue H17. A Mg(2+)-binding site is contributed by D19. Residue E45 participates in K(+) binding. L-methionine-binding residues include E58 and Q106. Positions 106–116 (QSAHISQGVDR) are flexible loop. ATP-binding positions include 166–168 (DAK), D241, 247–248 (RK), A264, and K268. D241 contacts L-methionine. K272 contributes to the L-methionine binding site.

It belongs to the AdoMet synthase family. As to quaternary structure, homotetramer; dimer of dimers. It depends on Mg(2+) as a cofactor. K(+) serves as cofactor.

It localises to the cytoplasm. The catalysed reaction is L-methionine + ATP + H2O = S-adenosyl-L-methionine + phosphate + diphosphate. Its pathway is amino-acid biosynthesis; S-adenosyl-L-methionine biosynthesis; S-adenosyl-L-methionine from L-methionine: step 1/1. In terms of biological role, catalyzes the formation of S-adenosylmethionine (AdoMet) from methionine and ATP. The overall synthetic reaction is composed of two sequential steps, AdoMet formation and the subsequent tripolyphosphate hydrolysis which occurs prior to release of AdoMet from the enzyme. The polypeptide is S-adenosylmethionine synthase (Paracoccus denitrificans (strain Pd 1222)).